Here is a 337-residue protein sequence, read N- to C-terminus: Heme A synthase (337 aa).

7 helical membrane passes run 3-23 (LARWLWVVAGLVVTIVAIGGI), 94-114 (VIGLAFLLPMMWFWIRGMIPA), 120-140 (LLALFALICGQGALGWYMVAS), 154-174 (LSAHLLTALFLLAGLVWTALD), 191-211 (GVAWMASIILFIQILLGAWVA), 248-268 (FLLHFLHRWWAWVAVIALVVL), and 289-309 (TMVVLGIATVLSEVSLWIAVA). His-254 is a binding site for heme. His-310 contributes to the heme binding site. A helical membrane pass occupies residues 311–331 (QLTGALLVISTAWAAHAIGTA).

Belongs to the COX15/CtaA family. Type 2 subfamily. Interacts with CtaB. Heme b serves as cofactor.

The protein localises to the cell membrane. It catalyses the reaction Fe(II)-heme o + 2 A + H2O = Fe(II)-heme a + 2 AH2. Its pathway is porphyrin-containing compound metabolism; heme A biosynthesis; heme A from heme O: step 1/1. Catalyzes the conversion of heme O to heme A by two successive hydroxylations of the methyl group at C8. The first hydroxylation forms heme I, the second hydroxylation results in an unstable dihydroxymethyl group, which spontaneously dehydrates, resulting in the formyl group of heme A. This is Heme A synthase from Erythrobacter litoralis (strain HTCC2594).